Reading from the N-terminus, the 459-residue chain is ATP-dependent protease ATPase subunit HslU (459 aa).

Residues valine 18, 60–65, aspartate 272, glutamate 337, and arginine 409 contribute to the ATP site; that span reads GVGKTE.

Belongs to the ClpX chaperone family. HslU subfamily. A double ring-shaped homohexamer of HslV is capped on each side by a ring-shaped HslU homohexamer. The assembly of the HslU/HslV complex is dependent on binding of ATP.

The protein localises to the cytoplasm. ATPase subunit of a proteasome-like degradation complex; this subunit has chaperone activity. The binding of ATP and its subsequent hydrolysis by HslU are essential for unfolding of protein substrates subsequently hydrolyzed by HslV. HslU recognizes the N-terminal part of its protein substrates and unfolds these before they are guided to HslV for hydrolysis. This chain is ATP-dependent protease ATPase subunit HslU, found in Thermoanaerobacter pseudethanolicus (strain ATCC 33223 / 39E) (Clostridium thermohydrosulfuricum).